We begin with the raw amino-acid sequence, 301 residues long: Troponin T, cardiac muscle (301 aa).

Acidic residues-rich tracts occupy residues 1–42 (MSDL…EEEA) and 50–74 (AETE…DGPV). Disordered stretches follow at residues 1 to 99 (MSDL…GERV) and 125 to 223 (ENRK…KKKK). S2 is modified (N-acetylserine). S2 is subject to Phosphoserine; by CK2. Positions 82–93 (RPFMPNLVPPKI) are enriched in pro residues. 2 stretches are compositionally biased toward basic and acidic residues: residues 125-186 (ENRK…DEAR) and 206-223 (QTER…KKKK). Phosphothreonine; by PKC/PRKCA is present on T207. S211 is subject to Phosphoserine; by PKC/PRKCA. Position 216 is a phosphothreonine; by PKC/PRKCA and RAF1 (T216). T297 carries the phosphothreonine; by PKC/PRKCA modification.

The protein belongs to the troponin T family. In terms of assembly, binds with troponins I and C to make the thin-filament regulatory complex, troponin. Post-translationally, phosphorylation at Thr-216 by PRKCA induces significant reduction in myofilament calcium sensitivity and actomyosin ATPase activity. As to expression, the major isoform in adult heart is CTNT4.

Functionally, troponin T is the tropomyosin-binding subunit of troponin, the thin filament regulatory complex which confers calcium-sensitivity to striated muscle actomyosin ATPase activity. The sequence is that of Troponin T, cardiac muscle (TNNT2) from Oryctolagus cuniculus (Rabbit).